A 251-amino-acid polypeptide reads, in one-letter code: uncharacterized protein (251 aa).

Residues 1–18 form the signal peptide; that stretch reads MRILIILSIILCSLFARA.

It belongs to the MlaA family.

This is an uncharacterized protein from Rickettsia felis (strain ATCC VR-1525 / URRWXCal2) (Rickettsia azadi).